We begin with the raw amino-acid sequence, 630 residues long: DNA mismatch repair protein MutL (630 aa).

It belongs to the DNA mismatch repair MutL/HexB family.

Functionally, this protein is involved in the repair of mismatches in DNA. It is required for dam-dependent methyl-directed DNA mismatch repair. May act as a 'molecular matchmaker', a protein that promotes the formation of a stable complex between two or more DNA-binding proteins in an ATP-dependent manner without itself being part of a final effector complex. In Lactobacillus johnsonii (strain CNCM I-12250 / La1 / NCC 533), this protein is DNA mismatch repair protein MutL.